The primary structure comprises 472 residues: Argininosuccinate lyase (472 aa).

It belongs to the lyase 1 family. Argininosuccinate lyase subfamily.

Its subcellular location is the cytoplasm. The enzyme catalyses 2-(N(omega)-L-arginino)succinate = fumarate + L-arginine. It functions in the pathway amino-acid biosynthesis; L-arginine biosynthesis; L-arginine from L-ornithine and carbamoyl phosphate: step 3/3. In Synechococcus sp. (strain CC9902), this protein is Argininosuccinate lyase.